Reading from the N-terminus, the 247-residue chain is tRNA pseudouridine synthase A (247 aa).

The active-site Nucleophile is aspartate 52. Tyrosine 113 lines the substrate pocket.

It belongs to the tRNA pseudouridine synthase TruA family. Homodimer.

The enzyme catalyses uridine(38/39/40) in tRNA = pseudouridine(38/39/40) in tRNA. In terms of biological role, formation of pseudouridine at positions 38, 39 and 40 in the anticodon stem and loop of transfer RNAs. The chain is tRNA pseudouridine synthase A from Rhizobium meliloti (strain 1021) (Ensifer meliloti).